Consider the following 426-residue polypeptide: Serine hydroxymethyltransferase (426 aa).

(6S)-5,6,7,8-tetrahydrofolate is bound by residues Leu118 and 122-124 (GHL). Lys227 bears the N6-(pyridoxal phosphate)lysine mark.

The protein belongs to the SHMT family. Homodimer. Requires pyridoxal 5'-phosphate as cofactor.

It localises to the cytoplasm. It carries out the reaction (6R)-5,10-methylene-5,6,7,8-tetrahydrofolate + glycine + H2O = (6S)-5,6,7,8-tetrahydrofolate + L-serine. Its pathway is one-carbon metabolism; tetrahydrofolate interconversion. It functions in the pathway amino-acid biosynthesis; glycine biosynthesis; glycine from L-serine: step 1/1. Its function is as follows. Catalyzes the reversible interconversion of serine and glycine with tetrahydrofolate (THF) serving as the one-carbon carrier. This reaction serves as the major source of one-carbon groups required for the biosynthesis of purines, thymidylate, methionine, and other important biomolecules. Also exhibits THF-independent aldolase activity toward beta-hydroxyamino acids, producing glycine and aldehydes, via a retro-aldol mechanism. This Mycolicibacterium paratuberculosis (strain ATCC BAA-968 / K-10) (Mycobacterium paratuberculosis) protein is Serine hydroxymethyltransferase.